We begin with the raw amino-acid sequence, 259 residues long: NAD kinase (259 aa).

Catalysis depends on Asp-43, which acts as the Proton acceptor. NAD(+)-binding positions include 43 to 44 (DG), 111 to 112 (NE), and Arg-136.

Belongs to the NAD kinase family. The cofactor is a divalent metal cation.

The protein resides in the cytoplasm. The enzyme catalyses NAD(+) + ATP = ADP + NADP(+) + H(+). Involved in the regulation of the intracellular balance of NAD and NADP, and is a key enzyme in the biosynthesis of NADP. Catalyzes specifically the phosphorylation on 2'-hydroxyl of the adenosine moiety of NAD to yield NADP. The chain is NAD kinase from Mycoplasma genitalium (strain ATCC 33530 / DSM 19775 / NCTC 10195 / G37) (Mycoplasmoides genitalium).